A 473-amino-acid polypeptide reads, in one-letter code: MTIMAPEAVGESLDPRDPLLRLSNFFDDGSVELLHERDRSGVLAAAGTVNGVRTIAFCTDGTVMGGAMGVEGCTHIVNAYDTAIEDQSPIVGIWHSGGARLAEGVRALHAVGQVFEAMIRASGYIPQISVVVGFAAGGAAYGPALTDVVVMAPESRVFVTGPDVVRSVTGEDVDMASLGGPETHHKKSGVCHIVADDELDAYDRGRRLVGLFCQQGHFDRSKAEAGDTDIHALLPESSRRAYDVRPIVTAILDADTPFDEFQANWAPSMVVGLGRLSGRTVGVLANNPLRLGGCLNSESAEKAARFVRLCDAFGIPLVVVVDVPGYLPGVDQEWGGVVRRGAKLLHAFGECTVPRVTLVTRKTYGGAYIAMNSRSLNATKVFAWPDAEVAVMGAKAAVGILHKKKLAAAPEHEREALHDQLAAEHERIAGGVDSALDIGVVDEKIDPAHTRSKLTEALAQAPARRGRHKNIPL.

The 224-residue stretch at 1 to 224 folds into the CoA carboxyltransferase N-terminal domain; sequence MTIMAPEAVG…QGHFDRSKAE (224 aa). The CoA carboxyltransferase C-terminal domain occupies 225–473; it reads AGDTDIHALL…RRGRHKNIPL (249 aa).

Belongs to the AccD/PCCB family. In terms of assembly, the biotin-dependent acyl-CoA carboxylase complex is composed of AccA3, which contains the biotin carboxylase (BC) and biotin carboxyl carrier protein (BCCP) domains, and AccD6, which contains the carboxyl transferase (CT) domain.

It catalyses the reaction N(6)-carboxybiotinyl-L-lysyl-[protein] + acetyl-CoA = N(6)-biotinyl-L-lysyl-[protein] + malonyl-CoA. The catalysed reaction is N(6)-carboxybiotinyl-L-lysyl-[protein] + propanoyl-CoA = methylmalonyl-CoA + N(6)-biotinyl-L-lysyl-[protein]. The protein operates within lipid metabolism; fatty acid biosynthesis. It functions in the pathway lipid metabolism; mycolic acid biosynthesis. Component of a biotin-dependent acyl-CoA carboxylase complex. This subunit transfers the CO2 from carboxybiotin to the CoA ester substrate. When associated with the alpha3 subunit AccA3, is involved in the carboxylation of acetyl-CoA and propionyl-CoA. In Mycobacterium bovis (strain ATCC BAA-935 / AF2122/97), this protein is Biotin-dependent acetyl-/propionyl-coenzyme A carboxylase beta6 subunit (accD6).